We begin with the raw amino-acid sequence, 614 residues long: Chaperone protein DnaK (614 aa).

Residue threonine 175 is modified to Phosphothreonine; by autocatalysis. Residues 577 to 614 (QAGGAEGAADPNAAAGGAQSAPHDDNVVDADFKVDEDK) form a disordered region. Residues 583-597 (GAADPNAAAGGAQSA) are compositionally biased toward low complexity. Residues 598–614 (PHDDNVVDADFKVDEDK) are compositionally biased toward basic and acidic residues.

It belongs to the heat shock protein 70 family.

Acts as a chaperone. The chain is Chaperone protein DnaK from Clostridium beijerinckii (strain ATCC 51743 / NCIMB 8052) (Clostridium acetobutylicum).